The primary structure comprises 198 residues: FMN-dependent NADH:quinone oxidoreductase (198 aa).

Residues Ser10, 16-18, 94-97, and 138-141 each bind FMN; these read SQS, MYNF, and TRGG.

This sequence belongs to the azoreductase type 1 family. As to quaternary structure, homodimer. FMN is required as a cofactor.

The enzyme catalyses 2 a quinone + NADH + H(+) = 2 a 1,4-benzosemiquinone + NAD(+). It catalyses the reaction N,N-dimethyl-1,4-phenylenediamine + anthranilate + 2 NAD(+) = 2-(4-dimethylaminophenyl)diazenylbenzoate + 2 NADH + 2 H(+). In terms of biological role, quinone reductase that provides resistance to thiol-specific stress caused by electrophilic quinones. Functionally, also exhibits azoreductase activity. Catalyzes the reductive cleavage of the azo bond in aromatic azo compounds to the corresponding amines. This is FMN-dependent NADH:quinone oxidoreductase from Shewanella baltica (strain OS185).